The primary structure comprises 577 residues: Chaperonin CPN60-1, mitochondrial (577 aa).

The N-terminal 34 residues, 1–34 (MYRAAASLASKARQAGNSLATRQVGSRLAWSRNY), are a transit peptide targeting the mitochondrion.

It belongs to the chaperonin (HSP60) family.

It localises to the mitochondrion. Functionally, implicated in mitochondrial protein import and macromolecular assembly. May facilitate the correct folding of imported proteins. May also prevent misfolding and promote the refolding and proper assembly of unfolded polypeptides generated under stress conditions in the mitochondrial matrix. This Zea mays (Maize) protein is Chaperonin CPN60-1, mitochondrial (CPN60I).